Consider the following 625-residue polypeptide: Alpha-amylase 1 (625 aa).

The signal sequence occupies residues 1–22 (MGFSKIALFSLFALFGLPTSLA). Cysteine 51 and cysteine 59 are oxidised to a cystine. Position 105 (tryptophan 105) interacts with substrate. Asparagine 143 contacts Ca(2+). Asparagine 153, asparagine 163, and asparagine 180 each carry an N-linked (GlcNAc...) asparagine glycan. A disulfide bridge connects residues cysteine 172 and cysteine 187. Ca(2+) is bound by residues glutamate 185 and aspartate 198. Arginine 227 is a substrate binding site. Aspartate 229 serves as a coordination point for Ca(2+). Aspartate 229 acts as the Nucleophile in catalysis. Residue 232–233 (KQ) coordinates substrate. Asparagine 241 carries an N-linked (GlcNAc...) asparagine glycan. Glutamate 253 lines the Ca(2+) pocket. Glutamate 253 acts as the Proton donor in catalysis. N-linked (GlcNAc...) asparagine glycans are attached at residues asparagine 260 and asparagine 286. Cysteine 263 and cysteine 306 are joined by a disulfide. Residue aspartate 322 participates in substrate binding. Residue asparagine 331 is glycosylated (N-linked (GlcNAc...) asparagine). Substrate is bound at residue arginine 370. Asparagine 440 and asparagine 461 each carry an N-linked (GlcNAc...) asparagine glycan. Residues 526-579 (SATSSSKSSSSSSSRSGSSSSSSSRSGSTSSSGSSHTITSTSQSVHTSGSSTST) are disordered. Serine 603 is lipidated: GPI-anchor amidated serine. A propeptide spans 604–625 (SANAVRVSILGVAAFIAIVLFI) (removed in mature form).

It belongs to the glycosyl hydrolase 13 family. The cofactor is Ca(2+).

It is found in the cell membrane. The enzyme catalyses Endohydrolysis of (1-&gt;4)-alpha-D-glucosidic linkages in polysaccharides containing three or more (1-&gt;4)-alpha-linked D-glucose units.. The chain is Alpha-amylase 1 (aah1) from Schizosaccharomyces pombe (strain 972 / ATCC 24843) (Fission yeast).